The sequence spans 366 residues: 3-dehydroquinate synthase (366 aa).

NAD(+)-binding positions include 71-76 (DGEKYK), 105-109 (GVIGD), 129-130 (TT), Lys-142, Lys-151, and 169-172 (TLQT). The Zn(2+) site is built by Glu-184, His-247, and His-264.

It belongs to the sugar phosphate cyclases superfamily. Dehydroquinate synthase family. Co(2+) serves as cofactor. Requires Zn(2+) as cofactor. It depends on NAD(+) as a cofactor.

The protein localises to the cytoplasm. The catalysed reaction is 7-phospho-2-dehydro-3-deoxy-D-arabino-heptonate = 3-dehydroquinate + phosphate. The protein operates within metabolic intermediate biosynthesis; chorismate biosynthesis; chorismate from D-erythrose 4-phosphate and phosphoenolpyruvate: step 2/7. In terms of biological role, catalyzes the conversion of 3-deoxy-D-arabino-heptulosonate 7-phosphate (DAHP) to dehydroquinate (DHQ). This Actinobacillus pleuropneumoniae serotype 5b (strain L20) protein is 3-dehydroquinate synthase.